Consider the following 388-residue polypeptide: Large ribosomal subunit protein uL3B (388 aa).

The span at Met1–Arg10 shows a compositional bias: basic and acidic residues. Residues Met1–Lys34 are disordered. The span at Pro18–Ala31 shows a compositional bias: basic residues.

Belongs to the universal ribosomal protein uL3 family. As to quaternary structure, component of the large ribosomal subunit (LSU). Mature yeast ribosomes consist of a small (40S) and a large (60S) subunit. The 40S small subunit contains 1 molecule of ribosomal RNA (18S rRNA) and at least 33 different proteins. The large 60S subunit contains 3 rRNA molecules (25S, 5.8S and 5S rRNA) and at least 46 different proteins. uL3 forms together with ES39L one of the contact sites for the signal recognition particle that targets ribosomes to the endoplasmic reticulum membrane.

It is found in the cytoplasm. Its function is as follows. Component of the ribosome, a large ribonucleoprotein complex responsible for the synthesis of proteins in the cell. The small ribosomal subunit (SSU) binds messenger RNAs (mRNAs) and translates the encoded message by selecting cognate aminoacyl-transfer RNA (tRNA) molecules. The large subunit (LSU) contains the ribosomal catalytic site termed the peptidyl transferase center (PTC), which catalyzes the formation of peptide bonds, thereby polymerizing the amino acids delivered by tRNAs into a polypeptide chain. The nascent polypeptides leave the ribosome through a tunnel in the LSU and interact with protein factors that function in enzymatic processing, targeting, and the membrane insertion of nascent chains at the exit of the ribosomal tunnel. uL3 plays a role in coordinating processes of accommodating the aminoacyl-tRNA in the PTC. The chain is Large ribosomal subunit protein uL3B (rpl302) from Schizosaccharomyces pombe (strain 972 / ATCC 24843) (Fission yeast).